Here is a 560-residue protein sequence, read N- to C-terminus: Chaperonin GroEL 2 (560 aa).

ATP is bound by residues 29–32 (TIGP), 86–90 (DGTTT), glycine 413, and aspartate 492. The tract at residues 520–542 (DKPEPPSAPGAEGGDPMGGMGGM) is disordered. Over residues 530 to 542 (AEGGDPMGGMGGM) the composition is skewed to gly residues.

It belongs to the chaperonin (HSP60) family. In terms of assembly, forms a cylinder of 14 subunits composed of two heptameric rings stacked back-to-back. Interacts with the co-chaperonin GroES.

Its subcellular location is the cytoplasm. The enzyme catalyses ATP + H2O + a folded polypeptide = ADP + phosphate + an unfolded polypeptide.. Its function is as follows. Together with its co-chaperonin GroES, plays an essential role in assisting protein folding. The GroEL-GroES system forms a nano-cage that allows encapsulation of the non-native substrate proteins and provides a physical environment optimized to promote and accelerate protein folding. The chain is Chaperonin GroEL 2 from Prochlorococcus marinus (strain NATL2A).